We begin with the raw amino-acid sequence, 352 residues long: Histidinol-phosphate aminotransferase (352 aa).

Residue Lys-216 is modified to N6-(pyridoxal phosphate)lysine.

It belongs to the class-II pyridoxal-phosphate-dependent aminotransferase family. Histidinol-phosphate aminotransferase subfamily. Pyridoxal 5'-phosphate is required as a cofactor.

The enzyme catalyses L-histidinol phosphate + 2-oxoglutarate = 3-(imidazol-4-yl)-2-oxopropyl phosphate + L-glutamate. The protein operates within amino-acid biosynthesis; L-histidine biosynthesis; L-histidine from 5-phospho-alpha-D-ribose 1-diphosphate: step 7/9. This chain is Histidinol-phosphate aminotransferase, found in Methanoculleus marisnigri (strain ATCC 35101 / DSM 1498 / JR1).